The chain runs to 239 residues: UDP-2,3-diacylglucosamine hydrolase (239 aa).

Positions 8, 10, 41, 78, and 113 each coordinate Mn(2+). 78 to 79 (NR) contributes to the substrate binding site. Residues Asp-121, Ser-159, Asn-163, Lys-166, and His-194 each coordinate substrate. The Mn(2+) site is built by His-194 and His-196.

The protein belongs to the LpxH family. Requires Mn(2+) as cofactor.

It localises to the cell inner membrane. The enzyme catalyses UDP-2-N,3-O-bis[(3R)-3-hydroxytetradecanoyl]-alpha-D-glucosamine + H2O = 2-N,3-O-bis[(3R)-3-hydroxytetradecanoyl]-alpha-D-glucosaminyl 1-phosphate + UMP + 2 H(+). The protein operates within glycolipid biosynthesis; lipid IV(A) biosynthesis; lipid IV(A) from (3R)-3-hydroxytetradecanoyl-[acyl-carrier-protein] and UDP-N-acetyl-alpha-D-glucosamine: step 4/6. Its function is as follows. Hydrolyzes the pyrophosphate bond of UDP-2,3-diacylglucosamine to yield 2,3-diacylglucosamine 1-phosphate (lipid X) and UMP by catalyzing the attack of water at the alpha-P atom. Involved in the biosynthesis of lipid A, a phosphorylated glycolipid that anchors the lipopolysaccharide to the outer membrane of the cell. This is UDP-2,3-diacylglucosamine hydrolase from Shewanella sp. (strain MR-7).